A 365-amino-acid chain; its full sequence is Protein dbl-1 (365 aa).

An N-terminal signal peptide occupies residues 1-42 (MNDSVRTTTTISSTKSLVHSFQLSAILHLFLLISFTPMSAAA). The propeptide occupies 43–244 (DQHASHATRR…KRSAQTGNSE (202 aa)). Residues Asn110, Asn143, and Asn167 are each glycosylated (N-linked (GlcNAc...) asparagine). The interval 231 to 259 (SVRRKRSAQTGNSERKNRKKGRKHHNTEA) is disordered. Residues 246–255 (KNRKKGRKHH) are compositionally biased toward basic residues. Intrachain disulfides connect Cys264/Cys330, Cys293/Cys362, and Cys297/Cys364. A glycan (N-linked (GlcNAc...) asparagine) is linked at Asn306.

Belongs to the TGF-beta family. As to quaternary structure, homodimer; disulfide-linked. Interacts with drag-1. As to expression, expressed in embryos just prior to hatching and remains constant in most cells throughout the larval and adult stages. Expressed by AVA command interneurons.

Its subcellular location is the secreted. In terms of biological role, ligand for the serine/threonine-protein kinase receptor type-1 sma-6 which activates a TGF-beta-like signaling pathway. Multifunctional protein that is involved in body size, male ectodermal patterning, innate immunity, lipid metabolism and neural plasticity. Dose-dependent regulator of body size, probably influencing the sizes of some or all cells rather than their number. Plays a role in patterning of male-specific genital sensilla (simple sense organs), known as rays, and mating-associated structures, spicules. Plays a protective role in response to infection by the Gram-negative bacterium S.marcescens, by activating expression of genes involved in innate immunity. Regulator of lipid homeostasis, acting non cell-autonomously in the hypodermis; partly dependent on the Insulin/IGF-1-like signaling (IIS) mediated pathway. Required for aversive olfactory learning of pathogenic bacteria in adults. Involved in gland cell morphology, possibly via activation of a Smad-independent TGF-beta signaling pathway. Required to oppose the autoregulation of expression of Runt-related transcription factor rnt-1. This chain is Protein dbl-1, found in Caenorhabditis elegans.